The primary structure comprises 247 residues: GTP cyclohydrolase 1 type 2 homolog (247 aa).

The a divalent metal cation site is built by H63, H64, D101, H215, and E219.

It belongs to the GTP cyclohydrolase I type 2/NIF3 family. Homohexamer.

This chain is GTP cyclohydrolase 1 type 2 homolog, found in Buchnera aphidicola subsp. Schizaphis graminum (strain Sg).